The following is a 202-amino-acid chain: LexA repressor (202 aa).

Residues 28–47 (IREIGDQFGITAKGAYDHLK) constitute a DNA-binding region (H-T-H motif). Residues serine 126 and lysine 163 each act as for autocatalytic cleavage activity in the active site.

This sequence belongs to the peptidase S24 family. As to quaternary structure, homodimer.

The enzyme catalyses Hydrolysis of Ala-|-Gly bond in repressor LexA.. In terms of biological role, represses a number of genes involved in the response to DNA damage (SOS response), including recA and lexA. In the presence of single-stranded DNA, RecA interacts with LexA causing an autocatalytic cleavage which disrupts the DNA-binding part of LexA, leading to derepression of the SOS regulon and eventually DNA repair. This chain is LexA repressor, found in Leptospira biflexa serovar Patoc (strain Patoc 1 / Ames).